The following is a 137-amino-acid chain: Large ribosomal subunit protein uL16 (137 aa).

It belongs to the universal ribosomal protein uL16 family. As to quaternary structure, part of the 50S ribosomal subunit.

Binds 23S rRNA and is also seen to make contacts with the A and possibly P site tRNAs. The polypeptide is Large ribosomal subunit protein uL16 (Rhodopseudomonas palustris (strain BisA53)).